The primary structure comprises 64 residues: Large ribosomal subunit protein bL35 (64 aa).

2 disordered regions span residues 1 to 20 (MPKA…TGTG) and 37 to 64 (PTKR…MLNG).

The protein belongs to the bacterial ribosomal protein bL35 family.

In Mycobacterium sp. (strain JLS), this protein is Large ribosomal subunit protein bL35.